Consider the following 447-residue polypeptide: MQVKLFYTLALWAPILVSAQLSGSVGPLVDFKTKAKNKTCDITDYGAVADGKTDVGPAILDAWGNCSTGGLIYVPPGTYSLATDLELKHGESTAFQLDGVLARGHEGSYQLILVRNCHDCEFFSGNSQGAVQGYGYEYLQDGNYGERLFRFQDVSDFSVHGFAAIDSPAYYLVFDTVSNGEIYNLLVRGIADLGMTDAFDIWGQNVWIHDIEVTNGDECVTVKSPASDFLIENIYCNLSGGTAIGSLGTGTNISNIHYRNLYMNQADACYLKTHNGDGIVKNIVWENVIVHGGPYPLAVNEAWGKDVGSTGVQVQNLTFRNWYGENTANSRPAIRIECDEDVPCYDITLDNVNLWTEDGDYVEWSCANAYGSGACLQEAKDTGDLATYTTAVTVTATPSYSATHMPGDFTTNPPSTAPFTIPPMPTSFYPGATPISTLLSLSGAGGL.

Positions 1–19 are cleaved as a signal peptide; that stretch reads MQVKLFYTLALWAPILVSA. 2 N-linked (GlcNAc...) asparagine glycosylation sites follow: Asn37 and Asn65. Cys40 and Cys66 are disulfide-bonded. Asp217 (proton donor) is an active-site residue. A disulfide bridge links Cys219 with Cys236. 2 N-linked (GlcNAc...) asparagine glycosylation sites follow: Asn237 and Asn252. Residue His291 is part of the active site. Residue Asn316 is glycosylated (N-linked (GlcNAc...) asparagine). Intrachain disulfides connect Cys338–Cys344 and Cys366–Cys375.

The protein belongs to the glycosyl hydrolase 28 family.

It localises to the secreted. Functionally, pectinolytic enzymes consist of four classes of enzymes: pectine lyase, polygalacturonase, pectin methylesterase and rhamnogalacturonase. Hydrolyzes alpha-D-galacturonopyranosyl-(1,2)-alpha-L-rhamnopyranosyl linkages in the backbone of the hairy regions of pectins. This chain is Probable rhamnogalacturonase C (rhgC), found in Aspergillus flavus (strain ATCC 200026 / FGSC A1120 / IAM 13836 / NRRL 3357 / JCM 12722 / SRRC 167).